Consider the following 158-residue polypeptide: Regulator of sigma D (158 aa).

The protein belongs to the Rsd/AlgQ family. Interacts with RpoD.

The protein localises to the cytoplasm. In terms of biological role, binds RpoD and negatively regulates RpoD-mediated transcription activation by preventing the interaction between the primary sigma factor RpoD with the catalytic core of the RNA polymerase and with promoter DNA. May be involved in replacement of the RNA polymerase sigma subunit from RpoD to RpoS during the transition from exponential growth to the stationary phase. This is Regulator of sigma D from Shigella boydii serotype 4 (strain Sb227).